Consider the following 162-residue polypeptide: Putative ureidoglycolate lyase (162 aa).

This sequence belongs to the ureidoglycolate lyase family. In terms of assembly, homodimer. Ni(2+) is required as a cofactor.

The enzyme catalyses (S)-ureidoglycolate = urea + glyoxylate. It functions in the pathway nitrogen metabolism; (S)-allantoin degradation. Functionally, catalyzes the catabolism of the allantoin degradation intermediate (S)-ureidoglycolate, generating urea and glyoxylate. Involved in the utilization of allantoin as nitrogen source. This Agrobacterium fabrum (strain C58 / ATCC 33970) (Agrobacterium tumefaciens (strain C58)) protein is Putative ureidoglycolate lyase.